The primary structure comprises 396 residues: Proteasome-activating nucleotidase (396 aa).

Residues 16–57 (ITYLKRRIRQLELQVRMLEADKERLERELSRLRSEMSRLRQP) are a coiled coil. Residues 181 to 186 (GCGKTL) and H320 each bind ATP. The tract at residues 394–396 (IYG) is docks into pockets in the proteasome alpha-ring to cause gate opening.

The protein belongs to the AAA ATPase family. As to quaternary structure, homohexamer. The hexameric complex has a two-ring architecture resembling a top hat that caps the 20S proteasome core at one or both ends. Upon ATP-binding, the C-terminus of PAN interacts with the alpha-rings of the proteasome core by binding to the intersubunit pockets.

The protein resides in the cytoplasm. Functionally, ATPase which is responsible for recognizing, binding, unfolding and translocation of substrate proteins into the archaeal 20S proteasome core particle. Is essential for opening the gate of the 20S proteasome via an interaction with its C-terminus, thereby allowing substrate entry and access to the site of proteolysis. Thus, the C-termini of the proteasomal ATPase function like a 'key in a lock' to induce gate opening and therefore regulate proteolysis. Unfolding activity requires energy from ATP hydrolysis, whereas ATP binding alone promotes ATPase-20S proteasome association which triggers gate opening, and supports translocation of unfolded substrates. The chain is Proteasome-activating nucleotidase from Pyrococcus abyssi (strain GE5 / Orsay).